Here is a 1755-residue protein sequence, read N- to C-terminus: Transposon Ty1-LR3 Gag-Pol polyprotein (1755 aa).

Positions 1–16 (MESQQLSQHSHISHGS) are enriched in low complexity. Disordered stretches follow at residues 1 to 93 (MESQ…MMTQ), 126 to 173 (PQSQ…RPPP), and 352 to 421 (GSRN…SKST). 2 stretches are compositionally biased toward polar residues: residues 48-60 (TKAN…TPAS) and 127-152 (QSQF…GNTF). The span at 153–165 (TDSSSADSDMTST) shows a compositional bias: low complexity. Residues 299 to 401 (NNGIHINNKV…NSKSKTARAH (103 aa)) form an RNA-binding region. The span at 402-418 (NVSTSNNSPSTDNDSIS) shows a compositional bias: low complexity. Ser416 is subject to Phosphoserine. Asp461 functions as the For protease activity; shared with dimeric partner in the catalytic mechanism. An integrase-type zinc finger-like region spans residues 583-640 (NVHTSESTRKYPYPFIHRMLAHANAQTIRYSLKNNTITYFNESDVDWSSAIDYQCPDC). Residues 660–829 (NSYEPFQYLH…SQHAGLAGLD (170 aa)) enclose the Integrase catalytic domain. Positions 671 and 736 each coordinate Mg(2+). Disordered regions lie at residues 956-1087 (SKAV…ETEK), 1092-1111 (RSPS…NIVP), and 1129-1172 (ADLP…SNAY). Low complexity predominate over residues 960-969 (SPTDSTPPST). Positions 1005 to 1015 (STPQISNIEST) are enriched in polar residues. Residues 1038–1052 (ESSHASKSKDFRHSD) are compositionally biased toward basic and acidic residues. 2 stretches are compositionally biased toward polar residues: residues 1053–1082 (SYSN…QISD) and 1101–1111 (PENNSSHNIVP). Residues 1178–1212 (KKRSLEDNETEIKVSRDTWNTKNMRSLEPPRSKKR) carry the Bipartite nuclear localization signal motif. The Reverse transcriptase Ty1/copia-type domain occupies 1338 to 1476 (NNYYITQLDI…DILGLEIKYQ (139 aa)). Residues Asp1346, Asp1427, Asp1428, Asp1610, Glu1652, and Asp1685 each coordinate Mg(2+). The RNase H Ty1/copia-type domain occupies 1610–1752 (DASYGNQPYY…IKTFKLLTNK (143 aa)).

In terms of assembly, the capsid protein forms a homotrimer, from which the VLPs are assembled. The protease is a homodimer, whose active site consists of two apposed aspartic acid residues. Post-translationally, initially, virus-like particles (VLPs) are composed of the structural unprocessed proteins Gag and Gag-Pol, and also contain the host initiator methionine tRNA (tRNA(i)-Met) which serves as a primer for minus-strand DNA synthesis, and a dimer of genomic Ty RNA. Processing of the polyproteins occurs within the particle and proceeds by an ordered pathway, called maturation. First, the protease (PR) is released by autocatalytic cleavage of the Gag-Pol polyprotein yielding capsid protein p45 and a Pol-p154 precursor protein. This cleavage is a prerequisite for subsequent processing of Pol-p154 at the remaining sites to release the mature structural and catalytic proteins. Maturation takes place prior to the RT reaction and is required to produce transposition-competent VLPs.

The protein localises to the cytoplasm. It localises to the nucleus. The enzyme catalyses DNA(n) + a 2'-deoxyribonucleoside 5'-triphosphate = DNA(n+1) + diphosphate. It catalyses the reaction Endonucleolytic cleavage to 5'-phosphomonoester.. In terms of biological role, capsid protein (CA) is the structural component of the virus-like particle (VLP), forming the shell that encapsulates the retrotransposons dimeric RNA genome. The particles are assembled from trimer-clustered units and there are holes in the capsid shells that allow for the diffusion of macromolecules. CA also has nucleocapsid-like chaperone activity, promoting primer tRNA(i)-Met annealing to the multipartite primer-binding site (PBS), dimerization of Ty1 RNA and initiation of reverse transcription. Its function is as follows. The aspartyl protease (PR) mediates the proteolytic cleavages of the Gag and Gag-Pol polyproteins after assembly of the VLP. Reverse transcriptase/ribonuclease H (RT) is a multifunctional enzyme that catalyzes the conversion of the retro-elements RNA genome into dsDNA within the VLP. The enzyme displays a DNA polymerase activity that can copy either DNA or RNA templates, and a ribonuclease H (RNase H) activity that cleaves the RNA strand of RNA-DNA heteroduplexes during plus-strand synthesis and hydrolyzes RNA primers. The conversion leads to a linear dsDNA copy of the retrotransposon that includes long terminal repeats (LTRs) at both ends. Functionally, integrase (IN) targets the VLP to the nucleus, where a subparticle preintegration complex (PIC) containing at least integrase and the newly synthesized dsDNA copy of the retrotransposon must transit the nuclear membrane. Once in the nucleus, integrase performs the integration of the dsDNA into the host genome. The sequence is that of Transposon Ty1-LR3 Gag-Pol polyprotein (TY1B-LR3) from Saccharomyces cerevisiae (strain ATCC 204508 / S288c) (Baker's yeast).